The sequence spans 97 residues: Ferredoxin-3 (97 aa).

2 4Fe-4S ferredoxin-type domains span residues 18-47 and 65-95; these read FAES…LKAL and KVMV…HNPL. The [4Fe-4S] cluster site is built by Cys-27, Cys-30, Cys-33, Cys-37, Cys-75, Cys-78, Cys-81, and Cys-85.

Homodimer. It depends on [4Fe-4S] cluster as a cofactor.

Ferredoxins are iron-sulfur proteins that transfer electrons in a wide variety of metabolic reactions. The chain is Ferredoxin-3 (fdxB) from Nostoc sp. (strain PCC 7120 / SAG 25.82 / UTEX 2576).